A 620-amino-acid polypeptide reads, in one-letter code: Chaperone protein HscA homolog (620 aa).

Belongs to the heat shock protein 70 family.

Functionally, chaperone involved in the maturation of iron-sulfur cluster-containing proteins. Has a low intrinsic ATPase activity which is markedly stimulated by HscB. The polypeptide is Chaperone protein HscA homolog (Pseudomonas fluorescens (strain ATCC BAA-477 / NRRL B-23932 / Pf-5)).